Here is a 126-residue protein sequence, read N- to C-terminus: Holo-[acyl-carrier-protein] synthase (126 aa).

Mg(2+) is bound by residues D9 and E57.

It belongs to the P-Pant transferase superfamily. AcpS family. Mg(2+) serves as cofactor.

It localises to the cytoplasm. It catalyses the reaction apo-[ACP] + CoA = holo-[ACP] + adenosine 3',5'-bisphosphate + H(+). In terms of biological role, transfers the 4'-phosphopantetheine moiety from coenzyme A to a Ser of acyl-carrier-protein. The sequence is that of Holo-[acyl-carrier-protein] synthase from Alteromonas mediterranea (strain DSM 17117 / CIP 110805 / LMG 28347 / Deep ecotype).